Reading from the N-terminus, the 1097-residue chain is FHIP family protein GK23746 (1097 aa).

Residues 1–21 (MSWLRSSPLRQSLTRTTSSGN) show a composition bias toward polar residues. Residues 1–25 (MSWLRSSPLRQSLTRTTSSGNGIRP) form a disordered region. Phosphoserine is present on S491. 3 disordered regions span residues 639–684 (DVSA…SGRR), 820–856 (NENS…RSAY), and 932–1042 (NNQQ…SEPV). A compositionally biased stretch (low complexity) spans 641-654 (SASSGNGTGSVVVG). A Phosphoserine modification is found at S823. 2 stretches are compositionally biased toward low complexity: residues 824–852 (PLHQ…GAQQ) and 932–948 (NNQQ…SSSS). Polar residues predominate over residues 949–962 (AVTTCETSLSTQPH). The segment covering 973–985 (TTSSTISTSSGTT) has biased composition (low complexity). The segment covering 986 to 995 (AGSGGGGGSG) has biased composition (gly residues). 2 stretches are compositionally biased toward low complexity: residues 996-1006 (SNSSFSIGGST) and 1013-1022 (SNNTTNSSST).

The protein belongs to the FHIP family.

The protein is FHIP family protein GK23746 of Drosophila willistoni (Fruit fly).